The sequence spans 258 residues: PHD finger protein ALFIN-LIKE 5 (258 aa).

The tract at residues 143–205 (AKKQTKEKAP…EEEERDNTLC (63 aa)) is disordered. A compositionally biased stretch (polar residues) spans 152-165 (PNSTNKPNKPSSKM). The segment covering 184–200 (DDDESGDEYADEEEEER) has biased composition (acidic residues). A PHD-type zinc finger spans residues 202–254 (NTLCGSCGTNDGKDEFWICCDSCERWYHGKCVKITPARAEHIKHYKCPDCGNK).

Belongs to the Alfin family.

The protein resides in the nucleus. Its function is as follows. Histone-binding component that specifically recognizes H3 tails trimethylated on 'Lys-4' (H3K4me3), which mark transcription start sites of virtually all active genes. This Oryza sativa subsp. indica (Rice) protein is PHD finger protein ALFIN-LIKE 5.